We begin with the raw amino-acid sequence, 160 residues long: 2-C-methyl-D-erythritol 2,4-cyclodiphosphate synthase (160 aa).

A divalent metal cation is bound by residues Asp-11 and His-13. 4-CDP-2-C-methyl-D-erythritol 2-phosphate-binding positions include 11–13 (DVH) and 37–38 (HS). His-45 contributes to the a divalent metal cation binding site. Residues 59-61 (DIG), 64-68 (FPDTD), 135-138 (TTTE), Phe-142, and Arg-145 contribute to the 4-CDP-2-C-methyl-D-erythritol 2-phosphate site.

The protein belongs to the IspF family. In terms of assembly, homotrimer. It depends on a divalent metal cation as a cofactor.

The enzyme catalyses 4-CDP-2-C-methyl-D-erythritol 2-phosphate = 2-C-methyl-D-erythritol 2,4-cyclic diphosphate + CMP. It participates in isoprenoid biosynthesis; isopentenyl diphosphate biosynthesis via DXP pathway; isopentenyl diphosphate from 1-deoxy-D-xylulose 5-phosphate: step 4/6. Its function is as follows. Involved in the biosynthesis of isopentenyl diphosphate (IPP) and dimethylallyl diphosphate (DMAPP), two major building blocks of isoprenoid compounds. Catalyzes the conversion of 4-diphosphocytidyl-2-C-methyl-D-erythritol 2-phosphate (CDP-ME2P) to 2-C-methyl-D-erythritol 2,4-cyclodiphosphate (ME-CPP) with a corresponding release of cytidine 5-monophosphate (CMP). This is 2-C-methyl-D-erythritol 2,4-cyclodiphosphate synthase from Alcanivorax borkumensis (strain ATCC 700651 / DSM 11573 / NCIMB 13689 / SK2).